Reading from the N-terminus, the 604-residue chain is Elongation factor 4 (604 aa).

The region spanning 10-191 is the tr-type G domain; it reads KNIRNFSIIA…KIITTIPAPS (182 aa). GTP is bound by residues 22–27 and 138–141; these read DHGKST and NKID.

Belongs to the TRAFAC class translation factor GTPase superfamily. Classic translation factor GTPase family. LepA subfamily.

It is found in the cell inner membrane. It carries out the reaction GTP + H2O = GDP + phosphate + H(+). In terms of biological role, required for accurate and efficient protein synthesis under certain stress conditions. May act as a fidelity factor of the translation reaction, by catalyzing a one-codon backward translocation of tRNAs on improperly translocated ribosomes. Back-translocation proceeds from a post-translocation (POST) complex to a pre-translocation (PRE) complex, thus giving elongation factor G a second chance to translocate the tRNAs correctly. Binds to ribosomes in a GTP-dependent manner. The polypeptide is Elongation factor 4 (Helicobacter pylori (strain J99 / ATCC 700824) (Campylobacter pylori J99)).